Reading from the N-terminus, the 339-residue chain is Protein FAM50A (339 aa).

The tract at residues 1–31 is disordered; the sequence is MAQYKGAASEAGRAMHLMKKREKQREQMEQM. Position 2 is an N-acetylalanine (Ala2). Lys100 is covalently cross-linked (Glycyl lysine isopeptide (Lys-Gly) (interchain with G-Cter in SUMO2)). Residues 150–177 form a disordered region; it reads TTKKKKLGKNPDVDTSFLPDRDREEEEN. The short motif at 152–155 is the Nuclear localization signal element; that stretch reads KKKK. Residues 168-177 are compositionally biased toward basic and acidic residues; the sequence is PDRDREEEEN.

Belongs to the FAM50 family. In terms of assembly, interacts with EFTUD2, a component of the spliceosome U5 complex. Interacts with DDX41, a component of the spliceosome C complex. In terms of tissue distribution, widely expressed in embryonic and adult tissues.

Its subcellular location is the nucleus. Functionally, probably involved in the regulation of pre-mRNA splicing. The protein is Protein FAM50A (Fam50a) of Mus musculus (Mouse).